Here is a 306-residue protein sequence, read N- to C-terminus: tRNA dimethylallyltransferase (306 aa).

14 to 21 is a binding site for ATP; the sequence is GPTAAGKS. Substrate is bound at residue 16–21; it reads TAAGKS. The segment at 39–42 is interaction with substrate tRNA; the sequence is DSRL.

Belongs to the IPP transferase family. Monomer. Mg(2+) is required as a cofactor.

It carries out the reaction adenosine(37) in tRNA + dimethylallyl diphosphate = N(6)-dimethylallyladenosine(37) in tRNA + diphosphate. Functionally, catalyzes the transfer of a dimethylallyl group onto the adenine at position 37 in tRNAs that read codons beginning with uridine, leading to the formation of N6-(dimethylallyl)adenosine (i(6)A). The polypeptide is tRNA dimethylallyltransferase (Synechococcus sp. (strain ATCC 27144 / PCC 6301 / SAUG 1402/1) (Anacystis nidulans)).